The following is a 245-amino-acid chain: uncharacterized protein (245 aa).

This is an uncharacterized protein from Mycobacterium tuberculosis (strain CDC 1551 / Oshkosh).